A 179-amino-acid polypeptide reads, in one-letter code: Large ribosomal subunit protein uL5 (179 aa).

The protein belongs to the universal ribosomal protein uL5 family. As to quaternary structure, part of the 50S ribosomal subunit; part of the 5S rRNA/L5/L18/L25 subcomplex. Contacts the 5S rRNA and the P site tRNA. Forms a bridge to the 30S subunit in the 70S ribosome.

Functionally, this is one of the proteins that bind and probably mediate the attachment of the 5S RNA into the large ribosomal subunit, where it forms part of the central protuberance. In the 70S ribosome it contacts protein S13 of the 30S subunit (bridge B1b), connecting the 2 subunits; this bridge is implicated in subunit movement. Contacts the P site tRNA; the 5S rRNA and some of its associated proteins might help stabilize positioning of ribosome-bound tRNAs. This is Large ribosomal subunit protein uL5 from Neisseria meningitidis serogroup C (strain 053442).